We begin with the raw amino-acid sequence, 967 residues long: Leucine-rich repeat receptor-like protein kinase PXC2 (967 aa).

An N-terminal signal peptide occupies residues 1–20 (MFNGAVSLLFLFLAVVSARA). At 21-609 (DPTFNDDVLG…QIRKSVLSIS (589 aa)) the chain is on the extracellular side. 11 LRR repeats span residues 91-114 (LQFL…EFPH), 115-139 (LGSL…FFEQ), 141-164 (GSLR…LSYC), 165-189 (STLT…WFLK), 191-212 (LKSL…LGGL), 214-236 (DLRH…IGRC), 237-260 (SSLK…MKSL), 262-284 (SCSS…IGDI), 285-307 (ATLE…SLGN), 308-332 (LEFL…LSNC), and 334-356 (NLIS…MFTG). 2 N-linked (GlcNAc...) asparagine glycosylation sites follow: asparagine 103 and asparagine 127. N-linked (GlcNAc...) asparagine glycosylation occurs at asparagine 171. Residue asparagine 219 is glycosylated (N-linked (GlcNAc...) asparagine). Residues asparagine 296, asparagine 315, and asparagine 331 are each glycosylated (N-linked (GlcNAc...) asparagine). Asparagine 374 is a glycosylation site (N-linked (GlcNAc...) asparagine). LRR repeat units follow at residues 384-408 (LQGL…IWIL), 410-432 (SLLQ…IGGL), 433-456 (KVAE…IGGA), 457-480 (VSLK…ISNC), 482-503 (ALNT…SIGS), 504-528 (LSNL…IEKL), and 530-552 (HLLT…GFFN). Residues asparagine 415, asparagine 446, asparagine 479, asparagine 487, asparagine 516, asparagine 535, asparagine 540, asparagine 571, and asparagine 587 are each glycosylated (N-linked (GlcNAc...) asparagine). Residues 610-630 (ALIAIGAAAVIAIGVVAVTLL) form a helical membrane-spanning segment. Residues 631–967 (NVHARSSVSR…LIQCPSHDLE (337 aa)) lie on the Cytoplasmic side of the membrane. The Protein kinase domain maps to 687-959 (LNKDSELGRG…EEVVKILELI (273 aa)). ATP contacts are provided by residues 693–701 (LGRGGFGVV) and lysine 715.

Belongs to the protein kinase superfamily. Ser/Thr protein kinase family. In terms of tissue distribution, expressed in the vascular strands of cotyledons, the shoot apex, hypocotyls, roots, leaves, stems and flowers.

It is found in the cell membrane. Leucine-rich repeat receptor-like protein kinase that may play a role in vascular tissues development. The sequence is that of Leucine-rich repeat receptor-like protein kinase PXC2 from Arabidopsis thaliana (Mouse-ear cress).